Here is a 152-residue protein sequence, read N- to C-terminus: Transposase for insertion sequence element IS200 (152 aa).

Positions 61 and 63 each coordinate Mg(2+). The Nucleophile role is filled by Tyr-125. Gln-129 serves as a coordination point for Mg(2+).

It belongs to the transposase 17 family. As to quaternary structure, homodimer. It depends on Mg(2+) as a cofactor.

Its function is as follows. Transposase responsible for transposition of the IS200 insertion sequence (IS) element. Transposition occurs in 2 main steps, excision from the donor DNA 'top strand' into a single strand circle and its subsequent reinsertion into the DNA target. This increases the copy number of the IS. The chain is Transposase for insertion sequence element IS200 (tnpA1) from Salmonella typhi.